The chain runs to 316 residues: Transaldolase (316 aa).

Residue Lys-131 is the Schiff-base intermediate with substrate of the active site.

It belongs to the transaldolase family. Type 1 subfamily. As to quaternary structure, homodimer.

Its subcellular location is the cytoplasm. The enzyme catalyses D-sedoheptulose 7-phosphate + D-glyceraldehyde 3-phosphate = D-erythrose 4-phosphate + beta-D-fructose 6-phosphate. It functions in the pathway carbohydrate degradation; pentose phosphate pathway; D-glyceraldehyde 3-phosphate and beta-D-fructose 6-phosphate from D-ribose 5-phosphate and D-xylulose 5-phosphate (non-oxidative stage): step 2/3. In terms of biological role, transaldolase is important for the balance of metabolites in the pentose-phosphate pathway. This chain is Transaldolase, found in Glaesserella parasuis serovar 5 (strain SH0165) (Haemophilus parasuis).